The chain runs to 260 residues: Lipid II isoglutaminyl synthase (glutamine-hydrolyzing) subunit GatD (260 aa).

A GATase cobBQ-type domain is found at 16-214 (QLNIAHLYGN…FHGPILSRNA (199 aa)). The Nucleophile role is filled by Cys-107. Residue Arg-142 coordinates substrate. His-206 is a catalytic residue.

This sequence belongs to the CobB/CobQ family. GatD subfamily. Forms a heterodimer with MurT.

It catalyses the reaction beta-D-GlcNAc-(1-&gt;4)-Mur2Ac(oyl-L-Ala-gamma-D-Glu-L-Lys-D-Ala-D-Ala)-di-trans,octa-cis-undecaprenyl diphosphate + L-glutamine + ATP + H2O = beta-D-GlcNAc-(1-&gt;4)-Mur2Ac(oyl-L-Ala-D-isoglutaminyl-L-Lys-D-Ala-D-Ala)-di-trans,octa-cis-undecaprenyl diphosphate + L-glutamate + ADP + phosphate + H(+). The catalysed reaction is L-glutamine + H2O = L-glutamate + NH4(+). It participates in cell wall biogenesis; peptidoglycan biosynthesis. Its function is as follows. The lipid II isoglutaminyl synthase complex catalyzes the formation of alpha-D-isoglutamine in the cell wall lipid II stem peptide. The GatD subunit catalyzes the hydrolysis of glutamine to glutamate and ammonia. The resulting ammonia molecule is channeled to the active site of MurT. This is Lipid II isoglutaminyl synthase (glutamine-hydrolyzing) subunit GatD from Streptococcus pneumoniae (strain ATCC BAA-255 / R6).